The sequence spans 196 residues: ATP-dependent Clp protease proteolytic subunit (196 aa).

The active-site Nucleophile is Ser-101. The active site involves His-126.

It belongs to the peptidase S14 family. Component of the chloroplastic Clp protease core complex.

It is found in the plastid. The protein localises to the chloroplast stroma. It carries out the reaction Hydrolysis of proteins to small peptides in the presence of ATP and magnesium. alpha-casein is the usual test substrate. In the absence of ATP, only oligopeptides shorter than five residues are hydrolyzed (such as succinyl-Leu-Tyr-|-NHMec, and Leu-Tyr-Leu-|-Tyr-Trp, in which cleavage of the -Tyr-|-Leu- and -Tyr-|-Trp bonds also occurs).. Its function is as follows. Cleaves peptides in various proteins in a process that requires ATP hydrolysis. Has a chymotrypsin-like activity. Plays a major role in the degradation of misfolded proteins. The chain is ATP-dependent Clp protease proteolytic subunit from Nicotiana tabacum (Common tobacco).